The following is an 878-amino-acid chain: Phosphoenolpyruvate carboxylase (878 aa).

Residues histidine 137 and lysine 545 contribute to the active site.

It belongs to the PEPCase type 1 family. It depends on Mg(2+) as a cofactor.

It carries out the reaction oxaloacetate + phosphate = phosphoenolpyruvate + hydrogencarbonate. Its function is as follows. Forms oxaloacetate, a four-carbon dicarboxylic acid source for the tricarboxylic acid cycle. The polypeptide is Phosphoenolpyruvate carboxylase (Yersinia pseudotuberculosis serotype O:1b (strain IP 31758)).